A 237-amino-acid chain; its full sequence is tRNA (guanine-N(7)-)-methyltransferase (237 aa).

Positions 68, 93, 120, and 143 each coordinate S-adenosyl-L-methionine. Asp143 is an active-site residue. Residues Lys147, Asp179, and 216 to 219 contribute to the substrate site; that span reads TKFE.

Belongs to the class I-like SAM-binding methyltransferase superfamily. TrmB family.

It carries out the reaction guanosine(46) in tRNA + S-adenosyl-L-methionine = N(7)-methylguanosine(46) in tRNA + S-adenosyl-L-homocysteine. It functions in the pathway tRNA modification; N(7)-methylguanine-tRNA biosynthesis. In terms of biological role, catalyzes the formation of N(7)-methylguanine at position 46 (m7G46) in tRNA. The protein is tRNA (guanine-N(7)-)-methyltransferase of Shewanella piezotolerans (strain WP3 / JCM 13877).